The chain runs to 120 residues: Neuromedin-B (120 aa).

The first 29 residues, Met-1–Cys-29, serve as a signal peptide directing secretion. A propeptide spanning residues Met-30–Arg-44 is cleaved from the precursor. A Methionine amide modification is found at Met-54. A propeptide spanning residues Ser-58–Lys-120 is cleaved from the precursor.

It belongs to the bombesin/neuromedin-B/ranatensin family. As to expression, brain, intestine, and ovaries and early embryos (stages 2 and 10).

It localises to the secreted. Stimulates smooth muscle contraction. The polypeptide is Neuromedin-B (nmb) (Xenopus laevis (African clawed frog)).